The sequence spans 515 residues: Glucose-6-phosphate 1-dehydrogenase (515 aa).

N-acetylalanine is present on alanine 2. Residue serine 8 is modified to Phosphoserine. Threonine 10 carries the phosphothreonine modification. The residue at position 26 (phenylalanine 26) is a Phosphoserine. Residues 38-45 (GASGDLAK) and arginine 72 each bind NADP(+). The residue at position 89 (lysine 89) is an N6-acetyllysine. The NADP(+) site is built by tyrosine 147 and lysine 171. D-glucose 6-phosphate is bound by residues lysine 171, 201–205 (HYLGK), glutamate 239, and aspartate 258. Lysine 171 bears the N6-(2-hydroxyisobutyryl)lysine; alternate mark. Lysine 171 is subject to N6-acetyllysine; alternate. Histidine 263 (proton acceptor) is an active-site residue. Arginine 357 is a binding site for NADP(+). D-glucose 6-phosphate is bound by residues lysine 360 and arginine 365. NADP(+) contacts are provided by lysine 366, arginine 370, and arginine 393. Position 395 (glutamine 395) interacts with D-glucose 6-phosphate. NADP(+) is bound by residues 401–403 (YTK) and 421–423 (DLT). An N6-acetyllysine modification is found at lysine 403. An N6-acetyllysine modification is found at lysine 432. Position 487 (arginine 487) interacts with NADP(+). Lysine 497 carries the post-translational modification N6-acetyllysine. Residues tyrosine 503 and tryptophan 509 each contribute to the NADP(+) site. Residue tyrosine 503 is modified to Phosphotyrosine.

It belongs to the glucose-6-phosphate dehydrogenase family. In terms of assembly, homotetramer; dimer of dimers. Interacts with SIRT2; the interaction is enhanced by H(2)O(2) treatment. Forms a ternary complex with ALDOB and TP53; this interaction is direct. ALDOB stabilizes the complex inhibiting G6PD activity and keeping oxidative pentose phosphate metabolism in check. In terms of processing, acetylated by ELP3 at Lys-403; acetylation inhibits its homodimerization and enzyme activity. Deacetylated by SIRT2 at Lys-403; deacetylation stimulates its enzyme activity. As to expression, isoform Long is found in lymphoblasts, granulocytes and sperm.

It localises to the cytoplasm. The protein localises to the cytosol. The protein resides in the membrane. The catalysed reaction is D-glucose 6-phosphate + NADP(+) = 6-phospho-D-glucono-1,5-lactone + NADPH + H(+). Its pathway is carbohydrate degradation; pentose phosphate pathway; D-ribulose 5-phosphate from D-glucose 6-phosphate (oxidative stage): step 1/3. Catalyzes the rate-limiting step of the oxidative pentose-phosphate pathway, which represents a route for the dissimilation of carbohydrates besides glycolysis. The main function of this enzyme is to provide reducing power (NADPH) and pentose phosphates for fatty acid and nucleic acid synthesis. This chain is Glucose-6-phosphate 1-dehydrogenase (G6PD), found in Homo sapiens (Human).